Here is a 399-residue protein sequence, read N- to C-terminus: Elongation factor Tu (399 aa).

Residues 10–204 (KPHVNIGTIG…AVDASIPEPE (195 aa)) enclose the tr-type G domain. The G1 stretch occupies residues 19-26 (GHVDHGKT). 19–26 (GHVDHGKT) is a binding site for GTP. Thr26 serves as a coordination point for Mg(2+). A G2 region spans residues 60-64 (GITIN). Positions 81–84 (DCPG) are G3. GTP-binding positions include 81 to 85 (DCPGH) and 136 to 139 (NKCD). Positions 136–139 (NKCD) are G4. The interval 174–176 (SGL) is G5.

Belongs to the TRAFAC class translation factor GTPase superfamily. Classic translation factor GTPase family. EF-Tu/EF-1A subfamily. Monomer.

It localises to the cytoplasm. The enzyme catalyses GTP + H2O = GDP + phosphate + H(+). Its function is as follows. GTP hydrolase that promotes the GTP-dependent binding of aminoacyl-tRNA to the A-site of ribosomes during protein biosynthesis. The polypeptide is Elongation factor Tu (Prochlorococcus marinus (strain AS9601)).